Consider the following 320-residue polypeptide: Aspartate carbamoyltransferase catalytic subunit (320 aa).

Carbamoyl phosphate contacts are provided by Arg70 and Thr71. Lys98 is an L-aspartate binding site. 3 residues coordinate carbamoyl phosphate: Arg120, His149, and Gln152. L-aspartate-binding residues include Arg182 and Arg237. Carbamoyl phosphate-binding residues include Gly278 and Pro279.

It belongs to the aspartate/ornithine carbamoyltransferase superfamily. ATCase family. Heterododecamer (2C3:3R2) of six catalytic PyrB chains organized as two trimers (C3), and six regulatory PyrI chains organized as three dimers (R2).

The enzyme catalyses carbamoyl phosphate + L-aspartate = N-carbamoyl-L-aspartate + phosphate + H(+). Its pathway is pyrimidine metabolism; UMP biosynthesis via de novo pathway; (S)-dihydroorotate from bicarbonate: step 2/3. In terms of biological role, catalyzes the condensation of carbamoyl phosphate and aspartate to form carbamoyl aspartate and inorganic phosphate, the committed step in the de novo pyrimidine nucleotide biosynthesis pathway. The sequence is that of Aspartate carbamoyltransferase catalytic subunit from Vesicomyosocius okutanii subsp. Calyptogena okutanii (strain HA).